The primary structure comprises 152 residues: MFP1 attachment factor 1 (152 aa).

Disordered stretches follow at residues 1–33 (MAEIDSAQSQETVTQETQNKPMTTSFSIWPPTQ) and 107–152 (DTVK…ETEP). The tract at residues 12–115 (TVTQETQNKP…IDTVKSRSAP (104 aa)) is WPP. Polar residues predominate over residues 134 to 152 (EPSSASGLTGEVSSVETEP).

As to quaternary structure, interacts with WAP through its WPP domain. Binds to MFP1 and FPP proteins. Expressed in young tomato leaves, young fruits, and flowers (at protein level).

It is found in the nucleus envelope. Its subcellular location is the cytoplasm. The protein localises to the golgi apparatus. It localises to the nucleus. The protein resides in the nucleus matrix. This chain is MFP1 attachment factor 1 (MAF1), found in Solanum lycopersicum (Tomato).